The primary structure comprises 64 residues: Protein translocase subunit SecE (64 aa).

Residues 35-55 (LVVLGTVAFITVFFAVVDYGI) traverse the membrane as a helical segment.

The protein belongs to the SecE/SEC61-gamma family. As to quaternary structure, component of the Sec protein translocase complex. Heterotrimer consisting of SecY, SecE and SecG subunits. The heterotrimers can form oligomers, although 1 heterotrimer is thought to be able to translocate proteins. Interacts with the ribosome. Interacts with SecDF, and other proteins may be involved. Interacts with SecA.

It localises to the cell membrane. In terms of biological role, essential subunit of the Sec protein translocation channel SecYEG. Clamps together the 2 halves of SecY. May contact the channel plug during translocation. This Halalkalibacterium halodurans (strain ATCC BAA-125 / DSM 18197 / FERM 7344 / JCM 9153 / C-125) (Bacillus halodurans) protein is Protein translocase subunit SecE.